A 151-amino-acid chain; its full sequence is Methylglyoxal synthase (151 aa).

Residues 1-151 (MKKTTRTMAA…DYQAYLAERT (151 aa)) enclose the MGS-like domain. Substrate is bound by residues His19, Lys23, 45-48 (TGTT), and 65-66 (SG). Asp71 functions as the Proton donor/acceptor in the catalytic mechanism. His98 lines the substrate pocket.

The protein belongs to the methylglyoxal synthase family.

The enzyme catalyses dihydroxyacetone phosphate = methylglyoxal + phosphate. Its function is as follows. Catalyzes the formation of methylglyoxal from dihydroxyacetone phosphate. This Vibrio cholerae serotype O1 (strain ATCC 39541 / Classical Ogawa 395 / O395) protein is Methylglyoxal synthase.